The chain runs to 179 residues: DNA utilization protein HofN (179 aa).

The chain crosses the membrane as a helical span at residues 19-39; the sequence is LRFWLLMFVAPLLLAVGITLI.

The protein resides in the cell inner membrane. Its function is as follows. Required for the use of extracellular DNA as a nutrient. This is DNA utilization protein HofN (hofN) from Escherichia coli (strain K12).